The following is a 218-amino-acid chain: Ribose-5-phosphate isomerase A (218 aa).

Residues Thr28 to Thr31, Asp81 to Asp84, and Lys94 to Gly97 contribute to the substrate site. Glu103 serves as the catalytic Proton acceptor. Lys121 is a binding site for substrate.

This sequence belongs to the ribose 5-phosphate isomerase family. Homodimer.

It catalyses the reaction aldehydo-D-ribose 5-phosphate = D-ribulose 5-phosphate. It participates in carbohydrate degradation; pentose phosphate pathway; D-ribose 5-phosphate from D-ribulose 5-phosphate (non-oxidative stage): step 1/1. In terms of biological role, catalyzes the reversible conversion of ribose-5-phosphate to ribulose 5-phosphate. The chain is Ribose-5-phosphate isomerase A from Buchnera aphidicola subsp. Baizongia pistaciae (strain Bp).